The sequence spans 762 residues: Hyperosmolality-gated Ca2+ permeable channel 2.2 (762 aa).

10 helical membrane-spanning segments follow: residues 3-23, 90-110, 144-164, 354-374, 402-422, 445-465, 500-520, 557-577, 594-614, and 615-635; these read VSAL…LVSL, MVIC…AFVL, LWVH…LLYF, IATL…VTFV, VITG…VPPL, KILY…GSVI, GWAG…NLIA, VIAP…YLIY, QYWP…QVIA, and LGFF…PLIL.

The protein belongs to the CSC1 (TC 1.A.17) family.

Its subcellular location is the membrane. Functionally, acts as an osmosensitive calcium-permeable cation channel. This Arabidopsis thaliana (Mouse-ear cress) protein is Hyperosmolality-gated Ca2+ permeable channel 2.2.